The following is a 180-amino-acid chain: UPF0227 protein YcfP (180 aa).

This sequence belongs to the UPF0227 family.

The chain is UPF0227 protein YcfP from Escherichia coli O139:H28 (strain E24377A / ETEC).